The following is a 301-amino-acid chain: Probable alpha-L-glutamate ligase 1 (301 aa).

The region spanning 104–287 is the ATP-grasp domain; that stretch reads LQLLSRKNIG…VAEKIIQFIE (184 aa). Residues Lys-141, 178–179, Asp-187, and 211–213 each bind ATP; these read EY and RSN. Mg(2+) is bound by residues Asp-248, Glu-260, and Asn-262. Mn(2+) is bound by residues Asp-248, Glu-260, and Asn-262.

The protein belongs to the RimK family. Mg(2+) is required as a cofactor. Mn(2+) serves as cofactor.

The polypeptide is Probable alpha-L-glutamate ligase 1 (Shewanella frigidimarina (strain NCIMB 400)).